We begin with the raw amino-acid sequence, 3123 residues long: Protein bark beetle (3123 aa).

An N-terminal signal peptide occupies residues 1–34 (MKLQHHKTNRQRISKPHRDPKWASICLWLLVTLA). Residues 35-2714 (FSTHLARSQE…IIDPLSWRAD (2680 aa)) lie on the Extracellular side of the membrane. Residues 83–104 (DVTVAPQGSTPSMTSSSSYTEL) form a disordered region. Residues 91-102 (STPSMTSSSSYT) are compositionally biased toward low complexity. Residues 191–295 (IRLVDGPTPV…YHNDLGIQCL (105 aa)) enclose the SRCR 1 domain. 3 cysteine pairs are disulfide-bonded: Cys216–Cys284, Cys231–Cys294, and Cys262–Cys272. The N-linked (GlcNAc...) asparagine glycan is linked to Asn221. PbH1 repeat units follow at residues 358–380 (GLPP…NSTR), 382–404 (WAGF…FVNS), and 406–428 (QGAV…KYVG). 3 N-linked (GlcNAc...) asparagine glycosylation sites follow: Asn377, Asn389, and Asn403. Cys446 and Cys474 are joined by a disulfide. Positions 446 to 559 (CTLPTTSGQT…NGFFRMTSGD (114 aa)) constitute a CUB domain. Asn498 and Asn523 each carry an N-linked (GlcNAc...) asparagine glycan. 3 PbH1 repeats span residues 562 to 584 (AYDL…AIDN), 586 to 609 (RSKL…HVTS), and 611 to 633 (AGDV…NITY). 8 N-linked (GlcNAc...) asparagine glycosylation sites follow: Asn615, Asn620, Asn630, Asn639, Asn658, Asn672, Asn702, and Asn709. PbH1 repeat units follow at residues 756–778 (NLQG…FINN) and 789–809 (PVKL…HVVS). N-linked (GlcNAc...) asparagine glycosylation is found at Asn834, Asn900, and Asn1040. The 105-residue stretch at 1071–1175 (VRLVGGAGAN…HENDVGLRCY (105 aa)) folds into the SRCR 2 domain. 3 disulfide bridges follow: Cys1096–Cys1164, Cys1109–Cys1174, and Cys1144–Cys1154. 2 PbH1 repeats span residues 1219–1241 (HARH…GIIY) and 1248–1270 (KSVN…SLKQ). N-linked (GlcNAc...) asparagine glycosylation occurs at Asn1375. PbH1 repeat units lie at residues 1451-1475 (VPTL…YYNR) and 1489-1511 (NESI…LIRS). N-linked (GlcNAc...) asparagine glycosylation is found at Asn1489, Asn1520, and Asn1529. Residues 1553–1575 (LFHYVIQDTTFEQNTHGGFQVSL) form a PbH1 13 repeat. Asn1584, Asn1593, and Asn1614 each carry an N-linked (GlcNAc...) asparagine glycan. One copy of the PbH1 14 repeat lies at 1722-1744 (LYRNLIAENEMDYNLVAGVRSAR). Asn1883, Asn1920, and Asn1940 each carry an N-linked (GlcNAc...) asparagine glycan. An SRCR 3 domain is found at 1912–2037 (IRLCTSANNC…DDVFVFVSCN (126 aa)). Intrachain disulfides connect Cys1950–Cys2025, Cys1963–Cys2036, and Cys2000–Cys2010. PbH1 repeat units lie at residues 2104 to 2126 (HKNP…NMIA) and 2128 to 2150 (SGKL…SIVS). 5 N-linked (GlcNAc...) asparagine glycosylation sites follow: Asn2139, Asn2231, Asn2251, Asn2314, and Asn2357. 3 PbH1 repeats span residues 2337–2361 (TPTL…FSTC), 2372–2393 (MNSL…RIRA), and 2401–2424 (SLRG…YVEG). N-linked (GlcNAc...) asparagine glycosylation is found at Asn2459, Asn2536, Asn2546, Asn2566, Asn2596, and Asn2636. Residues 2715 to 2735 (IFAISIISAFVLAIILLILVA) traverse the membrane as a helical segment. The Cytoplasmic segment spans residues 2736 to 3123 (FCWFAKSKHR…SHSQPLETAM (388 aa)). Disordered regions lie at residues 2766-2789 (IDPQ…LSKG), 2961-2983 (YQRS…PFDQ), 2996-3015 (LYRP…ADMR), and 3025-3123 (RSSK…ETAM). The segment covering 2778 to 2788 (YNMSSNGTLSK) has biased composition (polar residues). Low complexity predominate over residues 2964–2973 (SSHSSFMPHR). 2 stretches are compositionally biased toward low complexity: residues 3047 to 3057 (PNVAPAGGPAQ) and 3068 to 3078 (SEESSPTTPSP). Over residues 3107-3123 (PLQTNGRSHSQPLETAM) the composition is skewed to polar residues.

N-glycosylated. In terms of processing, may be proteolytically cleaved in the extracellular domain. As to expression, expression detected in embryonic epithelia and central nervous system (at protein level). First detected during stage 13 in the tracheal system, the foregut, the hindgut, the salivary glands and the epidermis. Expression persists in these tissues until the end of embryogenesis. Expression in epithelia declines from late stage 15 and expression appears in the central nervous system during stage 16.

The protein localises to the cell membrane. Its subcellular location is the cell junction. The protein resides in the septate junction. It localises to the adherens junction. Required for the maturation but not the establishment of septate junctions in developing epithelial cells and is involved in epithelial cell adhesion during septate junction maturation. Plays a role in the proper localization of the septate junction core components pck/mega, kune, Nrx-IV and Nrg during late embryogenesis. Involved in the formation of tricellular junctions which mediate cell contact where three epithelial cells meet but not of bicellular junctions. Required for the accumulation of Gli at tricellular junctions. The protein is Protein bark beetle of Drosophila melanogaster (Fruit fly).